The primary structure comprises 275 residues: Shikimate dehydrogenase (NADP(+)) (275 aa).

Shikimate is bound by residues 19 to 21 (SIS) and threonine 66. The Proton acceptor role is filled by lysine 70. Glutamate 82 is an NADP(+) binding site. Asparagine 91 and aspartate 106 together coordinate shikimate. NADP(+)-binding positions include 129–133 (GAGGA), 153–158 (NRTYER), and isoleucine 219. Tyrosine 221 contributes to the shikimate binding site. Position 242 (glycine 242) interacts with NADP(+).

This sequence belongs to the shikimate dehydrogenase family. Homodimer.

The enzyme catalyses shikimate + NADP(+) = 3-dehydroshikimate + NADPH + H(+). It participates in metabolic intermediate biosynthesis; chorismate biosynthesis; chorismate from D-erythrose 4-phosphate and phosphoenolpyruvate: step 4/7. In terms of biological role, involved in the biosynthesis of the chorismate, which leads to the biosynthesis of aromatic amino acids. Catalyzes the reversible NADPH linked reduction of 3-dehydroshikimate (DHSA) to yield shikimate (SA). This Dictyoglomus turgidum (strain DSM 6724 / Z-1310) protein is Shikimate dehydrogenase (NADP(+)).